Reading from the N-terminus, the 279-residue chain is Type II iodothyronine deiodinase (279 aa).

Residues 1–7 lie on the Lumenal side of the membrane; that stretch reads MGLLSAD. Residues 8–28 traverse the membrane as a helical; Signal-anchor for type III membrane protein segment; the sequence is LLITLQILPVFFSNCLFLALY. Residues 29 to 279 lie on the Cytoplasmic side of the membrane; it reads DSVILLKHMV…TEDLSTDVSL (251 aa). Residue U132 is part of the active site. Non-standard amino acids (selenocysteine) are located at U132 and U265.

Belongs to the iodothyronine deiodinase family. As to quaternary structure, predominantly monomer. Can form homodimers but homodimerization is not essential for enzyme activity. In terms of tissue distribution, highly expressed in liver and in various parts of the brain including telencephalon, hippocampus, cerebellum, and brain stem, and weakly expressed in thyroid, lung, and small intestine. Not detected in skeletal muscle, heart atria or ventricle, gizzard or kidney.

The protein resides in the endoplasmic reticulum membrane. The catalysed reaction is 3,3',5-triiodo-L-thyronine + iodide + A + H(+) = L-thyroxine + AH2. It carries out the reaction 3,3'-diiodo-L-thyronine + iodide + A + H(+) = 3,3',5'-triiodo-L-thyronine + AH2. The enzyme catalyses 3'-iodo-L-thyronine + iodide + A + H(+) = 3',5'-diiodo-L-thyronine + AH2. It catalyses the reaction 3,3'-diiodothyronamine + iodide + A + H(+) = 3,3',5'-triiodothyronamine + AH2. The catalysed reaction is 3'-iodothyronamine + iodide + A + H(+) = 3',5'-diiodothyronamine + AH2. Its activity is regulated as follows. Not inhibited by N(6)-propylthiouracil. Plays a crucial role in the metabolism of thyroid hormones (TH) and has specific roles in TH activation and inactivation by deiodination. Catalyzes the deiodination of L-thyroxine (T4) to 3,5,3'-triiodothyronine (T3) and 3,3',5'-triiodothyronine (rT3) to 3,3'-diiodothyronine (3,3'-T2) via outer-ring deiodination (ORD). Catalyzes the deiodination of 3',5'-diiodothyronine (3',5'-T2) to 3'-monoiodothyronine (3'-T1) via ORD. Catalyzes the phenolic ring deiodinations of 3,3',5'-triiodothyronamine and 3',5'- diiodothyronamine. In Gallus gallus (Chicken), this protein is Type II iodothyronine deiodinase (DIO2).